The following is a 1293-amino-acid chain: MLDTNYYDRLQIGLATADQIRAWSHGEVKKPETINYRTLKPERDGLFCEKIFGPTRDWECYCGKYKRVRFKGIICERCGVEVTRSNVRRERMGHIELVAPVTHIWYFKGVPSRLGYLLDIAPKDLEKVIYFAAYMITAVDDEARHRDLPSLEAKVQTERSRLEQRRDSELEARRVKLEEDMAQLEADGAKADVRRKVKDGAEKELKHIETRAQRQIDRLDAVWDRFKNLKVQDLEGDEILYREMKSRFGKYFEGSMGAEAVKRRLHDFDLKSESEKLREIIKTGRGQKKTRALKRLKVVQAFLDSGNSPEAMVLDCVPVIPPDLRPMVQLDGGRFATSDLNDLYRRVINRNNRLKRLVDLGAPEIIVNNEKRMLQEAVDSLFDNGRRGRPVSGPGNRPLKSLSDMLKGKQGRFRQNLLGKRVDYSGRSVIVVGPQLKMHECGLPKTMALELFKPFVMKRLADLEHAQNVKSAKRMVERQRPVVWDVLEEVIKEHPVLLNRAPTLHRLGIQAFEPQLIEGKAIQLHPLVCSAFNADFDGDQMAVHLPLSPEAQAEARVLMLSTNNILKPADGRPVALPSHEMIIGAYYLTMALDGLKGEGRAFTSLAEAIMAHDLGELEIGAKIKLRLKGIVPPHDETVRADGSVILDTTLGQALFNEVLPDDYPYVDFLVGKKQIGKIVNDLSERMTQLEVAHVLDNLKDIGYKWGSLSGVTVSIGDVQTPPTKPEILAGYETRAAKVDREYDRGAVTEEERRQDLIQIWTEATAELTAAMEANFTQTNPIHMMVDSGARGSMTQMRQIAAMRGLVADPKGDIIPRPIKSNFREGLTVLEYFISTHGGRKGQADTALRTADSGYLTRRLVDVSQDVIVRENDCGTTRGMPKTIAVDDGNGNLVRVEGLDTAVYARCLAADAVDANGNVVVEANSDLGDEEISRLIAAGISQIKVRSVLTCTAAQGCCARCYGRSLSTGHLVDVGEAVGIIAAQSIGEPGTQLTMRTFHTGGVAGDDITQGLPRVVELFEARSPKGKSPLAEAAGVIRIDESDNRRKLVLVRDDGEDDVEYVVPRRARLEFDLDGTHRVIRDGVRVAAGEQLMGGTADPQDVLRISGVRRVQEYLVKEVQKVYNTQGAGIHEKHIEIVIRQMLRRITVIESGDTQMMPGELVDRGAYEAANRKAVAEGGRPAEGRPVLMGITKASLATESWLSAASFQETTKVLTDAAINGKTDTLVGLKENVILGKLIPAGTGLEVYRNMRVEPTAEAKAAAFTMNYDPFDYDFGSGSGEAVPLDDLDLGDLG.

4 residues coordinate Zn(2+): cysteine 60, cysteine 62, cysteine 75, and cysteine 78. Mg(2+) is bound by residues aspartate 535, aspartate 537, and aspartate 539. The Zn(2+) site is built by cysteine 873, cysteine 950, cysteine 957, and cysteine 960.

This sequence belongs to the RNA polymerase beta' chain family. In terms of assembly, the RNAP catalytic core consists of 2 alpha, 1 beta, 1 beta' and 1 omega subunit. When a sigma factor is associated with the core the holoenzyme is formed, which can initiate transcription. Requires Mg(2+) as cofactor. Zn(2+) serves as cofactor.

It carries out the reaction RNA(n) + a ribonucleoside 5'-triphosphate = RNA(n+1) + diphosphate. Its function is as follows. DNA-dependent RNA polymerase catalyzes the transcription of DNA into RNA using the four ribonucleoside triphosphates as substrates. In Cutibacterium acnes (strain DSM 16379 / KPA171202) (Propionibacterium acnes), this protein is DNA-directed RNA polymerase subunit beta'.